The chain runs to 473 residues: MKKNIGKITQIISAVVDVKFTNKGKLPQILNALECYNDKQRIVLEIAQHIGDDTVRCIAMNSTEGLVRGMEVVDTGSPISIPVGIETLGRIMNVVGEPIDGKGKIKGSSISSIYKSAPSFTQQSTDRNILVTGIKVVDLLAPYTKGGKIGLFGGAGVGKTVLIMELINNVAKAHGGYTVFAGVGERTREGNDLYHEMIDSGVINLEEPEKSKVALVYGQMNEPPGARARVALTGLTVAESFRDMNEGQDVLFFVDNIFRFTQAGSEVSALLGRIPSAVGYQPTLATDMGELQERITSTKHGSITSVQAIYVPADDLTDPAPATSFAHLDATTVLSRQIAELGIYPAVDPLDSTSQVLDPMIVGEEHYNVARKVQQILQTYKSLQDIIAILGMDELSEEDKLTVSRARKIQRFLSQPFHVAEVFTGAEGKFVNLADTIAGFKGLTEGKYDDLPEAAFYMVGTIEEALEKAKTLK.

ATP is bound at residue 153–160 (GGAGVGKT).

The protein belongs to the ATPase alpha/beta chains family. In terms of assembly, F-type ATPases have 2 components, CF(1) - the catalytic core - and CF(0) - the membrane proton channel. CF(1) has five subunits: alpha(3), beta(3), gamma(1), delta(1), epsilon(1). CF(0) has three main subunits: a(1), b(2) and c(9-12). The alpha and beta chains form an alternating ring which encloses part of the gamma chain. CF(1) is attached to CF(0) by a central stalk formed by the gamma and epsilon chains, while a peripheral stalk is formed by the delta and b chains.

It is found in the cell inner membrane. It catalyses the reaction ATP + H2O + 4 H(+)(in) = ADP + phosphate + 5 H(+)(out). Produces ATP from ADP in the presence of a proton gradient across the membrane. The catalytic sites are hosted primarily by the beta subunits. This chain is ATP synthase subunit beta, found in Rickettsia bellii (strain RML369-C).